The sequence spans 300 residues: Jacalin-related lectin 32 (300 aa).

Residue A2 is modified to N-acetylalanine. Jacalin-type lectin domains follow at residues 2–146 (AQKV…YFTT) and 154–297 (AKKL…HILP).

The protein belongs to the jacalin lectin family.

Its function is as follows. Involved in gametophytic development. This chain is Jacalin-related lectin 32 (JAL32), found in Arabidopsis thaliana (Mouse-ear cress).